The sequence spans 443 residues: Protoheme IX farnesyltransferase, mitochondrial (443 aa).

Transmembrane regions (helical) follow at residues 174 to 194, 235 to 255, 257 to 277, 280 to 300, 309 to 329, 364 to 384, and 411 to 431; these read AAGF…LTSV, LAVS…TLGV, PLTG…YTPL, ISIA…VMGW, AGAF…FNAL, LLVL…FPIM, and LFFC…TCKR.

This sequence belongs to the UbiA prenyltransferase family.

It is found in the mitochondrion membrane. The enzyme catalyses heme b + (2E,6E)-farnesyl diphosphate + H2O = Fe(II)-heme o + diphosphate. Its function is as follows. Converts protoheme IX and farnesyl diphosphate to heme O. In Pongo abelii (Sumatran orangutan), this protein is Protoheme IX farnesyltransferase, mitochondrial (COX10).